Consider the following 415-residue polypeptide: Corticotropin-releasing factor receptor 1 (415 aa).

Positions 1 to 23 (MARHPQLRLVKALLLLGLNPVSA) are cleaved as a signal peptide. Residues 24–111 (SLQDQHCESL…CQEILNEEKK (88 aa)) lie on the Extracellular side of the membrane. 3 disulfide bridges follow: Cys30/Cys54, Cys44/Cys87, and Cys68/Cys102. N-linked (GlcNAc...) asparagine glycosylation is found at Asn38, Asn78, and Asn98. An important for peptide agonist binding region spans residues 99-108 (YSECQEILNE). A helical membrane pass occupies residues 112–142 (SKVHYHVAVIINYLGHCISLVALLVAFVLFL). The Cytoplasmic portion of the chain corresponds to 143-149 (RLRSIRC). The chain crosses the membrane as a helical span at residues 150–174 (LRNIIHWNLISAFILRNATWFVVQL). Residues 175 to 189 (TMSPEVHQSNVGWCR) lie on the Extracellular side of the membrane. Cysteines 188 and 258 form a disulfide. The chain crosses the membrane as a helical span at residues 190-218 (LVTAAYNYFHVTNFFWMFGEGCYLHTAIV). The Cytoplasmic segment spans residues 219 to 225 (LTYSTDR). The helical transmembrane segment at 226–253 (LRKWMFICIGWGVPFPIIVAWAIGKLYY) threads the bilayer. At 254–269 (DNEKCWFGKRPGVYTD) the chain is on the extracellular side. The helical transmembrane segment at 270–295 (YIYQGPMILVLLINFIFLFNIVRILM) threads the bilayer. The interval 280–290 (LLINFIFLFNI) is important for antagonist binding. At 296–306 (TKLRASTTSET) the chain is on the cytoplasmic side. At Ser301 the chain carries Phosphoserine; by PKA. The helical transmembrane segment at 307–331 (IQYRKAVKATLVLLPLLGITYMLFF) threads the bilayer. Residues 332–338 (VNPGEDE) lie on the Extracellular side of the membrane. A helical transmembrane segment spans residues 339-368 (VSRVVFIYFNSFLESFQGFFVSVFYCFLNS). The Cytoplasmic portion of the chain corresponds to 369-415 (EVRSAIRKRWHRWQDKHSIRARVARAMSIPTSPTRVSFHSIKQSTAV).

This sequence belongs to the G-protein coupled receptor 2 family. Heterodimer; heterodimerizes with GPER1. Interacts (via N-terminal extracellular domain) with CRH and UCN. Interacts with DLG1; this inhibits endocytosis of CRHR1 after agonist binding. C-terminal Ser or Thr residues may be phosphorylated. Post-translationally, phosphorylation at Ser-301 by PKA prevents maximal coupling to Gq-protein, and thereby negatively regulates downstream signaling. Expressed abundantly in the pituitary, cerebral cortex, hippocampus, amygdala and cerebellum.

The protein localises to the cell membrane. Its subcellular location is the endosome. Functionally, G-protein coupled receptor for CRH (corticotropin-releasing factor) and UCN (urocortin). Has high affinity for CRH and UCN. Ligand binding causes a conformation change that triggers signaling via guanine nucleotide-binding proteins (G proteins) and down-stream effectors, such as adenylate cyclase. Promotes the activation of adenylate cyclase, leading to increased intracellular cAMP levels. Inhibits the activity of the calcium channel CACNA1H. Required for normal embryonic development of the adrenal gland and for normal hormonal responses to stress. Plays a role in the response to anxiogenic stimuli. The protein is Corticotropin-releasing factor receptor 1 (CRHR1) of Macaca mulatta (Rhesus macaque).